The primary structure comprises 757 residues: uncharacterized protein (757 aa).

Residues Gly640–Arg709 enclose the S1 motif domain. Residues Asp711–Arg741 are compositionally biased toward basic and acidic residues. The tract at residues Asp711 to Arg757 is disordered.

This is an uncharacterized protein from Neisseria meningitidis serogroup B (strain ATCC BAA-335 / MC58).